An 89-amino-acid polypeptide reads, in one-letter code: MAKKSKIEKEKRIEATVAKYAAKRAALKAAGDYQGLAKLPRDASPVRAHHRDLTDGRPHAYMRAFGLSRLNFRQLAHKGQIPGVRKASW.

This sequence belongs to the universal ribosomal protein uS14 family. As to quaternary structure, part of the 30S ribosomal subunit. Contacts proteins S3 and S10.

In terms of biological role, binds 16S rRNA, required for the assembly of 30S particles and may also be responsible for determining the conformation of the 16S rRNA at the A site. The protein is Small ribosomal subunit protein uS14 of Oenococcus oeni (strain ATCC BAA-331 / PSU-1).